We begin with the raw amino-acid sequence, 372 residues long: N-methyl-L-tryptophan oxidase (372 aa).

Position 4-34 (4-34) interacts with FAD; the sequence is DLIIIGSGSVGAAAGYYATRAGLNVLMTDAH. Cys-308 bears the S-8alpha-FAD cysteine mark.

It belongs to the MSOX/MTOX family. MTOX subfamily. In terms of assembly, monomer. Requires FAD as cofactor.

The enzyme catalyses N(alpha)-methyl-L-tryptophan + O2 + H2O = L-tryptophan + formaldehyde + H2O2. Catalyzes the oxidative demethylation of N-methyl-L-tryptophan. In Escherichia coli O139:H28 (strain E24377A / ETEC), this protein is N-methyl-L-tryptophan oxidase.